Consider the following 437-residue polypeptide: UDP-N-acetylmuramoylalanine--D-glutamate ligase (437 aa).

112–118 (GSNGKST) is a binding site for ATP.

It belongs to the MurCDEF family.

Its subcellular location is the cytoplasm. It catalyses the reaction UDP-N-acetyl-alpha-D-muramoyl-L-alanine + D-glutamate + ATP = UDP-N-acetyl-alpha-D-muramoyl-L-alanyl-D-glutamate + ADP + phosphate + H(+). It participates in cell wall biogenesis; peptidoglycan biosynthesis. Cell wall formation. Catalyzes the addition of glutamate to the nucleotide precursor UDP-N-acetylmuramoyl-L-alanine (UMA). This Haemophilus influenzae (strain PittGG) protein is UDP-N-acetylmuramoylalanine--D-glutamate ligase.